The primary structure comprises 760 residues: Probable 3',5'-cyclic phosphodiesterase pde-6 (760 aa).

Disordered stretches follow at residues 1–47 (MGDR…AATA) and 410–429 (KRSVVDAHREKRGSHGERRR). Residues 33–47 (PAARRGAQRAPAATA) show a composition bias toward low complexity. Residues 412-429 (SVVDAHREKRGSHGERRR) are compositionally biased toward basic and acidic residues. A PDEase domain is found at 426–750 (ERRRVSADVK…EKWKVMTSQW (325 aa)). Histidine 502 acts as the Proton donor in catalysis. A divalent metal cation-binding residues include histidine 506, histidine 542, aspartate 543, and aspartate 656.

The protein belongs to the cyclic nucleotide phosphodiesterase family. It depends on a divalent metal cation as a cofactor.

The catalysed reaction is a nucleoside 3',5'-cyclic phosphate + H2O = a nucleoside 5'-phosphate + H(+). This is Probable 3',5'-cyclic phosphodiesterase pde-6 (pde-6) from Caenorhabditis elegans.